A 444-amino-acid chain; its full sequence is Maltoporin (444 aa).

The first 24 residues, 1-24 (MITLRKVPLALAIAAGILSAQAGA), serve as a signal peptide directing secretion.

It belongs to the porin LamB (TC 1.B.3) family. In terms of assembly, homotrimer formed of three 18-stranded antiparallel beta-barrels, containing three independent channels.

Its subcellular location is the cell outer membrane. It carries out the reaction beta-maltose(in) = beta-maltose(out). Functionally, involved in the transport of maltose and maltodextrins. The polypeptide is Maltoporin (Enterobacter sp. (strain 638)).